We begin with the raw amino-acid sequence, 128 residues long: Glycine cleavage system H protein (128 aa).

The Lipoyl-binding domain maps to 25-107 (IITVGITHHA…YGAGWFFKLK (83 aa)). An N6-lipoyllysine modification is found at K66.

Belongs to the GcvH family. As to quaternary structure, the glycine cleavage system is composed of four proteins: P, T, L and H. (R)-lipoate serves as cofactor.

Functionally, the glycine cleavage system catalyzes the degradation of glycine. The H protein shuttles the methylamine group of glycine from the P protein to the T protein. The polypeptide is Glycine cleavage system H protein (Neisseria meningitidis serogroup A / serotype 4A (strain DSM 15465 / Z2491)).